The sequence spans 275 residues: NH(3)-dependent NAD(+) synthetase (275 aa).

46–53 provides a ligand contact to ATP; sequence GISGGQDS. Aspartate 52 contributes to the Mg(2+) binding site. Arginine 140 provides a ligand contact to deamido-NAD(+). Threonine 160 is an ATP binding site. Glutamate 165 contributes to the Mg(2+) binding site. Deamido-NAD(+) is bound by residues lysine 173 and aspartate 180. ATP is bound by residues lysine 189 and threonine 211. 260-261 is a binding site for deamido-NAD(+); sequence HK.

It belongs to the NAD synthetase family. Homodimer.

The catalysed reaction is deamido-NAD(+) + NH4(+) + ATP = AMP + diphosphate + NAD(+) + H(+). Its pathway is cofactor biosynthesis; NAD(+) biosynthesis; NAD(+) from deamido-NAD(+) (ammonia route): step 1/1. In terms of biological role, catalyzes the ATP-dependent amidation of deamido-NAD to form NAD. Uses ammonia as a nitrogen source. In Shigella dysenteriae serotype 1 (strain Sd197), this protein is NH(3)-dependent NAD(+) synthetase.